The sequence spans 363 residues: Two-pore potassium channel 1 (363 aa).

The interval 1–61 (MSSDAARTPL…DDVKIDEPPP (61 aa)) is disordered. Topologically, residues 1–78 (MSSDAARTPL…FSDLNPNLRR (78 aa)) are cytoplasmic. Residues 31–42 (SSRKRRLRRSRS) show a composition bias toward basic residues. A helical transmembrane segment spans residues 79–99 (VIMFLALYLTIGTLCFYLVRD). The pore-forming intramembrane region spans 111–130 (DALYFCIVTMTTVGYGDLVP). The helical transmembrane segment at 137 to 157 (LLACAFVFSGMVLVGHLLSRA) threads the bilayer. The Cytoplasmic segment spans residues 158–197 (ADYLVEKQEALLVRAFHLRQSFGPTDILKELHTNKLRYKC). A helical transmembrane segment spans residues 198 to 218 (YATCLVLVVLFIVGTIFLVMV). The pore-forming intramembrane region spans 225–244 (SAFYCVCSTVTTLGYGDKSF). Residues 251–271 (LFAVFWILTSSICLAQFFLYV) traverse the membrane as a helical segment. The Cytoplasmic portion of the chain corresponds to 272–363 (AELNTENKQR…LAQTTSQIQR (92 aa)). EF-hand domains follow at residues 288-323 (LTRR…EMGK) and 327-362 (KDIS…SQIQ). The Endoplasmic reticulum release signal signature appears at 296–298 (DLE). Asp301, Asp303, Asp305, Glu312, Asp340, Asp342, Ser344, Thr346, and Asp351 together coordinate Ca(2+).

Belongs to the two pore domain potassium channel (TC 1.A.1.7) family. Homodimer. Interacts with GRF1 and GRF6, but only GRF6 modulates the channel activity. Post-translationally, phosphorylation at Ser-42 increases and stabilizes the interaction with 14-3-3 proteins. As to expression, detected in mesophyll cells, guard cells and vascular tissues of the leaves. Expressed in the hilum, where the funiculus is attached during fruit maturation and in the embryo. Also expressed at a lower level in seedlings, root tips and elongation zones, and flowers. Could be detected in mitotically active tissues.

Its subcellular location is the vacuole membrane. With respect to regulation, could be activated by protein kinase C. Strongly induced by calcium. Blocked by barium, tetraethylammonium (TEA), quinine and quinidine. Functionally, voltage-independent, large conductance and potassium-selective tonoplast ion channel. Regulated by cytoplasmic calcium and pH. Does not mediate slow-vacuolar (SV) ionic currents, but essential to establish VK currents. Has some permeability for Rb(+) and NH(4)(+), but none for Na(+), Cs(+) or Li(+). Involved in intracellular K(+) redistribution and/or K(+) retranslocation between different tissues. This Arabidopsis thaliana (Mouse-ear cress) protein is Two-pore potassium channel 1 (TPK1).